The following is a 437-amino-acid chain: Phosphatidylserine decarboxylase proenzyme 1, mitochondrial (437 aa).

A mitochondrion-targeting transit peptide spans 1–18; sequence MLKFHRNVKPQFGAFARY. The Mitochondrial matrix segment spans residues 19–38; sequence SSLGKHNSRKRVGIIRLAYG. A helical transmembrane segment spans residues 39–57; it reads LTGIGLVGLAGFAWAQDRH. The Mitochondrial intermembrane portion of the chain corresponds to 58 to 437; sequence EKTYQKKGVQ…PLGRVVPSSH (380 aa). Active-site charge relay system; for autoendoproteolytic cleavage activity residues include D157, H287, and S401. Residue S401 is the Schiff-base intermediate with substrate; via pyruvic acid; for decarboxylase activity of the active site. The residue at position 401 (S401) is a Pyruvic acid (Ser); by autocatalysis.

It belongs to the phosphatidylserine decarboxylase family. PSD-B subfamily. Eukaryotic type I sub-subfamily. As to quaternary structure, heterodimer of a large membrane-associated beta subunit and a small pyruvoyl-containing alpha subunit. It depends on pyruvate as a cofactor. Post-translationally, is synthesized initially as an inactive proenzyme. Formation of the active enzyme involves a self-maturation process in which the active site pyruvoyl group is generated from an internal serine residue via an autocatalytic post-translational modification. Two non-identical subunits are generated from the proenzyme in this reaction, and the pyruvate is formed at the N-terminus of the alpha chain, which is derived from the carboxyl end of the proenzyme. The autoendoproteolytic cleavage occurs by a canonical serine protease mechanism, in which the side chain hydroxyl group of the serine supplies its oxygen atom to form the C-terminus of the beta chain, while the remainder of the serine residue undergoes an oxidative deamination to produce ammonia and the pyruvoyl prosthetic group on the alpha chain. During this reaction, the Ser that is part of the protease active site of the proenzyme becomes the pyruvoyl prosthetic group, which constitutes an essential element of the active site of the mature decarboxylase.

It localises to the mitochondrion. It is found in the mitochondrion inner membrane. It carries out the reaction a 1,2-diacyl-sn-glycero-3-phospho-L-serine + H(+) = a 1,2-diacyl-sn-glycero-3-phosphoethanolamine + CO2. Its pathway is phospholipid metabolism; phosphatidylethanolamine biosynthesis; phosphatidylethanolamine from CDP-diacylglycerol: step 2/2. Catalyzes the formation of phosphatidylethanolamine (PtdEtn) from phosphatidylserine (PtdSer). Plays a central role in phospholipid metabolism and in the interorganelle trafficking of phosphatidylserine. Together with psd2 and psd3, responsible for the majority of phosphatidylethanolamine synthesis. The sequence is that of Phosphatidylserine decarboxylase proenzyme 1, mitochondrial from Schizosaccharomyces pombe (strain 972 / ATCC 24843) (Fission yeast).